Consider the following 223-residue polypeptide: Large ribosomal subunit protein bL21 (223 aa).

The tract at residues 110 to 149 is disordered; the sequence is TALKSTTAEPKAADAPKAKAKAAPKAEKAAAPKAEKAPAK. Positions 133–147 are enriched in basic and acidic residues; it reads PKAEKAAAPKAEKAP.

The protein belongs to the bacterial ribosomal protein bL21 family. In terms of assembly, part of the 50S ribosomal subunit. Contacts protein L20.

Its function is as follows. This protein binds to 23S rRNA in the presence of protein L20. The protein is Large ribosomal subunit protein bL21 of Maricaulis maris (strain MCS10) (Caulobacter maris).